The following is a 310-amino-acid chain: Nucleotide-binding protein BLA_1368 (310 aa).

Residues 1 to 21 form a disordered region; sequence MQSARNEQRGTGPESPHAASP. 32–39 is a binding site for ATP; the sequence is GMSGAGRS. GTP is bound at residue 83–86; the sequence is DVRS.

Belongs to the RapZ-like family.

In terms of biological role, displays ATPase and GTPase activities. The sequence is that of Nucleotide-binding protein BLA_1368 from Bifidobacterium animalis subsp. lactis (strain AD011).